Consider the following 82-residue polypeptide: Pigment-dispersing hormone peptides (82 aa).

An N-terminal signal peptide occupies residues 1-26; that stretch reads MIGKYLSWFMLAFLFGFVLESYRVQS. A80 carries the post-translational modification Alanine amide.

The protein belongs to the arthropod PDH family. In terms of tissue distribution, expressed strongly in the head and weakly in the ventral nerve cord. Not detected in the midgut cecum or hindgut. In the cephalic neural complex, specifically localized to cells within the optic lobe, anteromedian protocerebrum, accessory lobe, tritocerebrum, and subesophageal ganglion.

It is found in the secreted. Functionally, the pigment-dispersing hormone causes the migration of the distal retinal pigment into the proximal end of the pigment chromatophore cells and thus decreases the amount of light entering the retinulas. May also function as a neurotransmitter and/or neuromodulator. This Armadillidium vulgare (Pillbug) protein is Pigment-dispersing hormone peptides.